The sequence spans 805 residues: Phenylalanine--tRNA ligase beta subunit (805 aa).

The tRNA-binding domain maps to 39–155 (VKVLGAFRIC…EDAPMGMRFI (117 aa)). Residues 408-479 (DTSRAYRFDP…RVASLTKLQG (72 aa)) enclose the B5 domain. Mg(2+)-binding residues include D457, D463, E466, and E467. Residues 707–804 (SDLQAVERDF…VAKATGATLR (98 aa)) form the FDX-ACB domain.

Belongs to the phenylalanyl-tRNA synthetase beta subunit family. Type 1 subfamily. As to quaternary structure, tetramer of two alpha and two beta subunits. Mg(2+) is required as a cofactor.

The protein resides in the cytoplasm. The enzyme catalyses tRNA(Phe) + L-phenylalanine + ATP = L-phenylalanyl-tRNA(Phe) + AMP + diphosphate + H(+). The polypeptide is Phenylalanine--tRNA ligase beta subunit (Cereibacter sphaeroides (strain ATCC 17023 / DSM 158 / JCM 6121 / CCUG 31486 / LMG 2827 / NBRC 12203 / NCIMB 8253 / ATH 2.4.1.) (Rhodobacter sphaeroides)).